The sequence spans 803 residues: Dynein axonemal intermediate chain 4 (803 aa).

Polar residues predominate over residues M1 to S33. Disordered regions lie at residues M1–G41, L88–G109, and S143–P163. The span at S143–S155 shows a compositional bias: low complexity. 6 WD repeats span residues Q492 to V532, K541 to D589, S616 to E656, G660 to T700, P703 to L742, and N748 to E787.

As to quaternary structure, part of the multisubunit axonemal dynein complex formed at least of two heavy chains and a number of intermediate and light chains. Associated with axonemal dynein subunits such as, DNAH2, DNAI3, and DYNLT1. Interacts with DYNLT1.

The protein localises to the cytoplasm. Its subcellular location is the cytoskeleton. It is found in the flagellum axoneme. It localises to the cilium axoneme. The protein resides in the dynein axonemal particle. Its function is as follows. Plays a critical role in the assembly of axonemal dynein complex, thereby playing a role in ciliary motility. This chain is Dynein axonemal intermediate chain 4, found in Rattus norvegicus (Rat).